The following is a 403-amino-acid chain: Protein LAZ1 homolog 2 (403 aa).

6 consecutive transmembrane segments (helical) span residues 16–36, 50–70, 162–182, 191–211, 236–256, and 269–289; these read SLIIGGSFATVAICLSLYSIL, WIVSVLFMVPVYATESIISLS, MILKTFCAFLTFLLELLGVYG, GYPYIVVVLNFSQMWALFCLV, IVFATWWQGFGIALLCYYGIL, and FLICIEMAIAAVAHLFVFPAE. The disordered stretch occupies residues 381 to 403; the sequence is SDGKEETEVTEEVTVETSVPPKE.

Belongs to the TMEM184 family.

Its subcellular location is the membrane. The polypeptide is Protein LAZ1 homolog 2 (Arabidopsis thaliana (Mouse-ear cress)).